We begin with the raw amino-acid sequence, 244 residues long: Acidic leucine-rich nuclear phosphoprotein 32 family member A (244 aa).

4 LRR repeats span residues 18–41, 43–64, 65–87, and 89–110; these read DVKE…TDEF, GLEF…PKLN, KLKK…AEKC, and NLTH…EPLK. Residues 123 to 161 form the LRRCT domain; that stretch reads CEVTNLNDYRENLFKLLPQLTYLDGYDRDDKEAPDSDAE. The interval 148-244 is disordered; it reads YDRDDKEAPD…DQDDEGEDDD (97 aa). Over residues 157-227 the composition is skewed to acidic residues; that stretch reads DSDAEGYVEG…EEDEGDEEAE (71 aa).

This sequence belongs to the ANP32 family. Phosphorylated on serine residues.

It is found in the nucleus. The protein resides in the cytoplasm. Its subcellular location is the endoplasmic reticulum. Implicated in a number of cellular processes, including proliferation, differentiation, caspase-dependent and caspase-independent apoptosis, suppression of transformation (tumor suppressor), inhibition of protein phosphatase 2A, regulation of mRNA trafficking and stability, and inhibition of acetyltransferases as part of the INHAT (inhibitor of histone acetyltransferases) complex. This is Acidic leucine-rich nuclear phosphoprotein 32 family member A (anp32a) from Xenopus laevis (African clawed frog).